Here is a 364-residue protein sequence, read N- to C-terminus: Protein BRI1-5 ENHANCED 1 (364 aa).

Residues 1–11 (MVREEQEEDDN) show a composition bias toward acidic residues. The interval 1-22 (MVREEQEEDDNNNNNNGGGERK) is disordered. Residues 44–49 (GGSGFV), Arg69, 98–99 (DL), Tyr202, Lys206, Val232, and Ser244 contribute to the NADP(+) site. Lys206 functions as the Proton donor in the catalytic mechanism.

It belongs to the NAD(P)-dependent epimerase/dehydratase family. As to quaternary structure, monomer. As to expression, mainly present in cell elongating-containing tissues. Strongly expressed in roots and flowers, also observed in petioles, stems, leaves and siliques.

The protein resides in the cytoplasm. It participates in plant hormone biosynthesis; brassinosteroid biosynthesis. Functionally, element of the brassinosteroid metabolic pathway that regulates typhasterol (TY), castasterone (CS) and brassinolide (BL) levels. Involved in the control of organ elongation. This is Protein BRI1-5 ENHANCED 1 from Arabidopsis thaliana (Mouse-ear cress).